The following is a 459-amino-acid chain: Serine--tRNA ligase (459 aa).

Residue 254 to 256 (TAE) coordinates L-serine. ATP is bound by residues 285–287 (RKE) and V301. Residue E308 participates in L-serine binding. Residue 372 to 375 (EMVS) coordinates ATP. T408 is an L-serine binding site.

This sequence belongs to the class-II aminoacyl-tRNA synthetase family. Type-1 seryl-tRNA synthetase subfamily. As to quaternary structure, homodimer. The tRNA molecule binds across the dimer.

It localises to the cytoplasm. It catalyses the reaction tRNA(Ser) + L-serine + ATP = L-seryl-tRNA(Ser) + AMP + diphosphate + H(+). The enzyme catalyses tRNA(Sec) + L-serine + ATP = L-seryl-tRNA(Sec) + AMP + diphosphate + H(+). Its pathway is aminoacyl-tRNA biosynthesis; selenocysteinyl-tRNA(Sec) biosynthesis; L-seryl-tRNA(Sec) from L-serine and tRNA(Sec): step 1/1. Functionally, catalyzes the attachment of serine to tRNA(Ser). Is also able to aminoacylate tRNA(Sec) with serine, to form the misacylated tRNA L-seryl-tRNA(Sec), which will be further converted into selenocysteinyl-tRNA(Sec). The chain is Serine--tRNA ligase from Staphylothermus marinus (strain ATCC 43588 / DSM 3639 / JCM 9404 / F1).